The following is a 38-amino-acid chain: Photosystem II reaction center protein L (38 aa).

Residues 17–37 (SLFWGLLLIFVLAILFSNYFF) form a helical membrane-spanning segment.

It belongs to the PsbL family. As to quaternary structure, PSII is composed of 1 copy each of membrane proteins PsbA, PsbB, PsbC, PsbD, PsbE, PsbF, PsbH, PsbI, PsbJ, PsbK, PsbL, PsbM, PsbT, PsbX, PsbY, PsbZ, Psb30/Ycf12, at least 3 peripheral proteins of the oxygen-evolving complex and a large number of cofactors. It forms dimeric complexes.

It localises to the plastid. The protein resides in the chloroplast thylakoid membrane. Its function is as follows. One of the components of the core complex of photosystem II (PSII). PSII is a light-driven water:plastoquinone oxidoreductase that uses light energy to abstract electrons from H(2)O, generating O(2) and a proton gradient subsequently used for ATP formation. It consists of a core antenna complex that captures photons, and an electron transfer chain that converts photonic excitation into a charge separation. This subunit is found at the monomer-monomer interface and is required for correct PSII assembly and/or dimerization. The protein is Photosystem II reaction center protein L of Chara vulgaris (Common stonewort).